A 149-amino-acid chain; its full sequence is Oligosaccharyltransferase complex subunit OSTC (149 aa).

Topologically, residues 1–32 (METLFRLPFAVLECPNIKLKRPGWVHMPSAMT) are cytoplasmic. A helical transmembrane segment spans residues 33–53 (VYALVVVSYFLITGGIIYDVI). Residues 54–83 (VEPPSVGSMTDEHGHQRPVAFLAYRVNGQY) lie on the Extracellular side of the membrane. Residues 84-104 (IMEGLASSFLFTMGGLGFIIL) traverse the membrane as a helical segment. At 105 to 117 (DRSNAPNIPKLNR) the chain is on the cytoplasmic side. The helical transmembrane segment at 118-138 (FLLLFIGFVSVLLSFFMARVF) threads the bilayer. Topologically, residues 139–149 (MRMKLPGYLMG) are extracellular.

This sequence belongs to the OSTC family. Specific component of the STT3A-containing form of the oligosaccharyltransferase (OST) complex.

The protein localises to the membrane. It participates in protein modification; protein glycosylation. Its function is as follows. Specific component of the STT3A-containing form of the oligosaccharyl transferase (OST) complex that catalyzes the initial transfer of a defined glycan (Glc(3)Man(9)GlcNAc(2) in eukaryotes) from the lipid carrier dolichol-pyrophosphate to an asparagine residue within an Asn-X-Ser/Thr consensus motif in nascent polypeptide chains, the first step in protein N-glycosylation. N-glycosylation occurs cotranslationally and the complex associates with the Sec61 complex at the channel-forming translocon complex that mediates protein translocation across the endoplasmic reticulum (ER). All subunits are required for a maximal enzyme activity. The polypeptide is Oligosaccharyltransferase complex subunit OSTC (Gallus gallus (Chicken)).